The following is a 140-amino-acid chain: Profilin (140 aa).

An N-acetylserine modification is found at Ser2.

It belongs to the profilin family. As to quaternary structure, occurs in many kinds of cells as a complex with monomeric actin in a 1:1 ratio.

The protein resides in the cytoplasm. It is found in the cytoskeleton. Its function is as follows. Binds to actin and affects the structure of the cytoskeleton. At high concentrations, profilin prevents the polymerization of actin, whereas it enhances it at low concentrations. By binding to PIP2, it inhibits the formation of IP3 and DG. The protein is Profilin of Clypeaster japonicus (Sand dollar).